Reading from the N-terminus, the 327-residue chain is WRKY transcription factor WRKY76 (327 aa).

The stretch at 56–76 (AKIVEAKVTQMSEENRRLTEV) forms a coiled coil. A disordered region spans residues 87-135 (RLGLDGSASPPRPVSPLSGKKRSRESMETANSCDANSNRHQGGDADHAE). Residues 106–112 (KKRSRES) carry the Nuclear localization signal motif. The span at 114–126 (ETANSCDANSNRH) shows a compositional bias: polar residues. A DNA-binding region (WRKY) is located at residues 160 to 226 (DTSLVVKDGY…YEGEHNHPHP (67 aa)).

It belongs to the WRKY group II-a family.

The protein resides in the nucleus. In terms of biological role, transcription repressor. Interacts specifically with the W box (5'-(T)TGAC[CT]-3'), a frequently occurring elicitor-responsive cis-acting element. Regulates, probably indirectly, the activation of defense-related genes during defense response. Modulates plant innate immunity against X.oryzae pv. oryzae (Xoo). This is WRKY transcription factor WRKY76 from Oryza sativa subsp. japonica (Rice).